Consider the following 239-residue polypeptide: Probable phosphatase Csac_1188 (239 aa).

Residues histidine 8, histidine 10, histidine 16, histidine 41, glutamate 74, histidine 102, histidine 132, aspartate 192, and histidine 194 each coordinate Zn(2+).

Belongs to the PHP family. The cofactor is Zn(2+).

This Caldicellulosiruptor saccharolyticus (strain ATCC 43494 / DSM 8903 / Tp8T 6331) protein is Probable phosphatase Csac_1188.